Consider the following 394-residue polypeptide: Cell division protein FtsZ (394 aa).

GTP is bound by residues 21–25 (GGGNN), Arg29, 108–110 (GTG), Glu139, Arg143, Asn166, and Asp187. A disordered region spans residues 317-394 (DKPSSQGRKA…EERRSRRTRR (78 aa)). Low complexity-rich tracts occupy residues 328 to 346 (STGF…SGAS) and 353 to 364 (SAHTSHSQSSES). Residues 365–388 (VSERSHTTKDDDIPSFIRNREERR) are compositionally biased toward basic and acidic residues.

The protein belongs to the FtsZ family. Homodimer. Polymerizes to form a dynamic ring structure in a strictly GTP-dependent manner. Interacts directly with several other division proteins.

It localises to the cytoplasm. Its function is as follows. Essential cell division protein that forms a contractile ring structure (Z ring) at the future cell division site. The regulation of the ring assembly controls the timing and the location of cell division. One of the functions of the FtsZ ring is to recruit other cell division proteins to the septum to produce a new cell wall between the dividing cells. Binds GTP and shows GTPase activity. This is Cell division protein FtsZ from Staphylococcus epidermidis (strain ATCC 35984 / DSM 28319 / BCRC 17069 / CCUG 31568 / BM 3577 / RP62A).